The following is a 123-amino-acid chain: MQWLAIGLGAAFGACLRGWLARFNPLHHWIPLGTLGANVLGGLLIGLALVWFERMGSGLSPNIRLFVITGFLGGLTTFSTFSAEVFTFIHHGRLLAALGLVGLHVGMTLLATALGFYCFKLVL.

The next 4 helical transmembrane spans lie at 1–21 (MQWL…GWLA), 32–52 (LGTL…LVWF), 66–86 (FVIT…AEVF), and 94–114 (LLAA…ATAL). Residues G73 and T76 each coordinate Na(+).

It belongs to the fluoride channel Fluc/FEX (TC 1.A.43) family.

It localises to the cell inner membrane. The catalysed reaction is fluoride(in) = fluoride(out). With respect to regulation, na(+) is not transported, but it plays an essential structural role and its presence is essential for fluoride channel function. Fluoride-specific ion channel. Important for reducing fluoride concentration in the cell, thus reducing its toxicity. The protein is Fluoride-specific ion channel FluC of Psychrobacter arcticus (strain DSM 17307 / VKM B-2377 / 273-4).